We begin with the raw amino-acid sequence, 764 residues long: 5-methyltetrahydropteroyltriglutamate--homocysteine methyltransferase (764 aa).

Residues 16–19 (RELK) and lysine 121 each bind 5-methyltetrahydropteroyltri-L-glutamate. L-homocysteine contacts are provided by residues 440–442 (IGS) and glutamate 493. L-methionine contacts are provided by residues 440 to 442 (IGS) and glutamate 493. 5-methyltetrahydropteroyltri-L-glutamate is bound by residues 524-525 (RC) and tryptophan 570. Residue aspartate 608 coordinates L-homocysteine. Aspartate 608 serves as a coordination point for L-methionine. Glutamate 614 is a 5-methyltetrahydropteroyltri-L-glutamate binding site. Residues histidine 650, cysteine 652, and glutamate 674 each contribute to the Zn(2+) site. Histidine 703 serves as the catalytic Proton donor. Cysteine 735 provides a ligand contact to Zn(2+).

This sequence belongs to the vitamin-B12 independent methionine synthase family. The cofactor is Zn(2+).

The enzyme catalyses 5-methyltetrahydropteroyltri-L-glutamate + L-homocysteine = tetrahydropteroyltri-L-glutamate + L-methionine. The protein operates within amino-acid biosynthesis; L-methionine biosynthesis via de novo pathway; L-methionine from L-homocysteine (MetE route): step 1/1. Functionally, catalyzes the transfer of a methyl group from 5-methyltetrahydrofolate to homocysteine resulting in methionine formation. The protein is 5-methyltetrahydropteroyltriglutamate--homocysteine methyltransferase of Burkholderia lata (strain ATCC 17760 / DSM 23089 / LMG 22485 / NCIMB 9086 / R18194 / 383).